A 231-amino-acid chain; its full sequence is NADH-ubiquinone oxidoreductase chain 4 (231 aa).

The next 6 membrane-spanning stretches (helical) occupy residues 1 to 21 (PIAG…YGII), 34 to 54 (MFLP…LTCL), 63 to 85 (IAYS…TPWG), 89 to 111 (AMAL…NTTY), 128 to 148 (ILPM…ATPP), and 156 to 176 (LLIM…LGLS).

Belongs to the complex I subunit 4 family.

It is found in the mitochondrion membrane. The catalysed reaction is a ubiquinone + NADH + 5 H(+)(in) = a ubiquinol + NAD(+) + 4 H(+)(out). In terms of biological role, core subunit of the mitochondrial membrane respiratory chain NADH dehydrogenase (Complex I) that is believed to belong to the minimal assembly required for catalysis. Complex I functions in the transfer of electrons from NADH to the respiratory chain. The immediate electron acceptor for the enzyme is believed to be ubiquinone. This is NADH-ubiquinone oxidoreductase chain 4 (MT-ND4) from Bothriechis lateralis (Side-striped palm pitviper).